The sequence spans 234 residues: Nuclear transcription factor Y subunit B-6 (234 aa).

2 disordered regions span residues 1–21 (MERGGFHGYRKLSVNNTTPSP) and 35–55 (MRPPEFNQPNKTSNGGEEECT). Residues 63–69 (MPIANVI) mediate DNA binding. Residues 90 to 101 (IQECVSEYISFI) are subunit association domain (SAD). Residues 206 to 234 (NEPNSKMSGSSSGASGARVEVFPTQQHKY) are disordered. Positions 213–222 (SGSSSGASGA) are enriched in low complexity.

Belongs to the NFYB/HAP3 subunit family. In terms of assembly, heterotrimeric transcription factor composed of three components, NF-YA, NF-YB and NF-YC. NF-YB and NF-YC must interact and dimerize for NF-YA association and DNA binding. Interacts with PRN1. Binds directly with DPB3-1. As to expression, expressed in roots, flowers and developing siliques. Present in etiolated seedlings.

The protein localises to the nucleus. Component of the NF-Y/HAP transcription factor complex. The NF-Y complex stimulates the transcription of various genes by recognizing and binding to a CCAAT motif in promoters. Plays a role in the regulation of the embryogenesis. Involved in the abscisic acid (ABA) signaling pathway. The protein is Nuclear transcription factor Y subunit B-6 of Arabidopsis thaliana (Mouse-ear cress).